The chain runs to 267 residues: Phosphate import ATP-binding protein PstB (267 aa).

An ABC transporter domain is found at 12-251 (VSLDNVSIRY…EFDKTKNMFN (240 aa)). Residue 44 to 51 (GPSGCGKS) coordinates ATP.

Belongs to the ABC transporter superfamily. Phosphate importer (TC 3.A.1.7) family. The complex is composed of two ATP-binding proteins (PstB), two transmembrane proteins (PstC and PstA) and a solute-binding protein (PstS).

The protein localises to the cell inner membrane. The enzyme catalyses phosphate(out) + ATP + H2O = ADP + 2 phosphate(in) + H(+). In terms of biological role, part of the ABC transporter complex PstSACB involved in phosphate import. Responsible for energy coupling to the transport system. This Prochlorococcus marinus (strain NATL2A) protein is Phosphate import ATP-binding protein PstB.